The primary structure comprises 81 residues: uncharacterized protein (81 aa).

The N-terminal stretch at 1 to 20 (MIDDHEALLLLVLSSGPAAL) is a signal peptide.

This is an uncharacterized protein from Treponema pallidum (strain Nichols).